The sequence spans 264 residues: Undecaprenyl-diphosphatase (264 aa).

8 helical membrane-spanning segments follow: residues 7–27 (IVIP…PVSS), 45–65 (TKIL…LFFY), 86–106 (IHVL…YNKI), 109–129 (LFNP…LIIA), 145–165 (INLV…YPGF), 186–206 (VNFS…LDLI), 215–235 (LNIP…FLLI), and 244–264 (KVSL…IYFI).

It belongs to the UppP family.

It is found in the cell membrane. The catalysed reaction is di-trans,octa-cis-undecaprenyl diphosphate + H2O = di-trans,octa-cis-undecaprenyl phosphate + phosphate + H(+). Functionally, catalyzes the dephosphorylation of undecaprenyl diphosphate (UPP). Confers resistance to bacitracin. This is Undecaprenyl-diphosphatase from Buchnera aphidicola subsp. Schizaphis graminum (strain Sg).